A 194-amino-acid chain; its full sequence is uncharacterized protein (194 aa).

This is an uncharacterized protein from Rickettsia prowazekii (strain Madrid E).